A 360-amino-acid chain; its full sequence is Mannose-1-phosphate guanyltransferase beta-B (360 aa).

The protein belongs to the transferase hexapeptide repeat family.

It catalyses the reaction alpha-D-mannose 1-phosphate + GTP + H(+) = GDP-alpha-D-mannose + diphosphate. It functions in the pathway nucleotide-sugar biosynthesis; GDP-alpha-D-mannose biosynthesis; GDP-alpha-D-mannose from alpha-D-mannose 1-phosphate (GTP route): step 1/1. Its function is as follows. Catalyzes the formation of GDP-mannose, an essential precursor of glycan moieties of glycoproteins and glycolipids. This Xenopus laevis (African clawed frog) protein is Mannose-1-phosphate guanyltransferase beta-B (gmppb-b).